Reading from the N-terminus, the 433-residue chain is UDP-N-acetylglucosamine 1-carboxyvinyltransferase 2 (433 aa).

23-24 is a phosphoenolpyruvate binding site; sequence KN. Residue arginine 96 coordinates UDP-N-acetyl-alpha-D-glucosamine. Residue cysteine 120 is the Proton donor of the active site. Residue cysteine 120 is modified to 2-(S-cysteinyl)pyruvic acid O-phosphothioketal. Residues 125–129, aspartate 308, and valine 330 contribute to the UDP-N-acetyl-alpha-D-glucosamine site; that span reads RPIDL.

Belongs to the EPSP synthase family. MurA subfamily.

The protein localises to the cytoplasm. The catalysed reaction is phosphoenolpyruvate + UDP-N-acetyl-alpha-D-glucosamine = UDP-N-acetyl-3-O-(1-carboxyvinyl)-alpha-D-glucosamine + phosphate. The protein operates within cell wall biogenesis; peptidoglycan biosynthesis. Functionally, cell wall formation. Adds enolpyruvyl to UDP-N-acetylglucosamine. This is UDP-N-acetylglucosamine 1-carboxyvinyltransferase 2 from Enterococcus faecalis (strain ATCC 700802 / V583).